The sequence spans 312 residues: Mevalonate kinase (312 aa).

Residue proline 104 to serine 114 participates in ATP binding. Catalysis depends on aspartate 155, which acts as the Proton acceptor.

This sequence belongs to the GHMP kinase family. Mevalonate kinase subfamily. Homodimer. Mg(2+) is required as a cofactor.

It is found in the cytoplasm. The enzyme catalyses (R)-mevalonate + ATP = (R)-5-phosphomevalonate + ADP + H(+). It participates in isoprenoid biosynthesis; isopentenyl diphosphate biosynthesis via mevalonate pathway; isopentenyl diphosphate from (R)-mevalonate: step 1/3. Its activity is regulated as follows. Farnesyl- and geranyl-pyrophosphates are competitive inhibitors. Slightly inhibited by high concentration of ATP. Functionally, catalyzes the phosphorylation of (R)-mevalonate (MVA) to (R)-mevalonate 5-phosphate (MVAP). Functions in the mevalonate (MVA) pathway leading to isopentenyl diphosphate (IPP), a key precursor for the biosynthesis of isoprenoid compounds such as archaeal membrane lipids. This is Mevalonate kinase from Methanocaldococcus jannaschii (strain ATCC 43067 / DSM 2661 / JAL-1 / JCM 10045 / NBRC 100440) (Methanococcus jannaschii).